The primary structure comprises 119 residues: Protein TusC (119 aa).

The protein belongs to the DsrF/TusC family. Heterohexamer, formed by a dimer of trimers. The hexameric TusBCD complex contains 2 copies each of TusB, TusC and TusD. The TusBCD complex interacts with TusE.

It is found in the cytoplasm. Its function is as follows. Part of a sulfur-relay system required for 2-thiolation of 5-methylaminomethyl-2-thiouridine (mnm(5)s(2)U) at tRNA wobble positions. The chain is Protein TusC from Escherichia coli O127:H6 (strain E2348/69 / EPEC).